A 144-amino-acid polypeptide reads, in one-letter code: Large ribosomal subunit protein uL16 (144 aa).

A compositionally biased stretch (basic residues) spans 1 to 16 (MLVPKRVKHRKVQRGH). A disordered region spans residues 1-20 (MLVPKRVKHRKVQRGHMRGE).

It belongs to the universal ribosomal protein uL16 family. In terms of assembly, part of the 50S ribosomal subunit.

Its function is as follows. Binds 23S rRNA and is also seen to make contacts with the A and possibly P site tRNAs. This is Large ribosomal subunit protein uL16 from Limosilactobacillus reuteri (strain DSM 20016) (Lactobacillus reuteri).